A 153-amino-acid polypeptide reads, in one-letter code: Large ribosomal subunit protein uL30 (153 aa).

The protein belongs to the universal ribosomal protein uL30 family. In terms of assembly, part of the 50S ribosomal subunit.

This is Large ribosomal subunit protein uL30 from Metallosphaera sedula (strain ATCC 51363 / DSM 5348 / JCM 9185 / NBRC 15509 / TH2).